The sequence spans 315 residues: Calumenin (315 aa).

A signal peptide spans 1–19 (MDLRQFLMCLSLCTAFALS). Serine 44 is subject to Phosphoserine. Tyrosine 47 is subject to Phosphotyrosine. Threonine 65 carries the post-translational modification Phosphothreonine. EF-hand domains lie at 68-103 (ESKE…AQKK), 104-139 (YIYD…TYLD), 151-186 (QMMV…EEYD), 188-223 (MKDI…HDGN), 229-264 (WVKT…SDYD), and 265-300 (HAEA…FVGS). Serine 69 bears the Phosphoserine mark. Ca(2+)-binding residues include aspartate 81, aspartate 83, aspartate 85, glutamate 92, aspartate 117, asparagine 119, aspartate 121, and glutamate 128. An N-linked (GlcNAc...) asparagine glycan is attached at asparagine 131. Residue aspartate 164 participates in Ca(2+) binding. Lysine 165 bears the N6-acetyllysine mark. Ca(2+) is bound by residues aspartate 166, aspartate 168, glutamate 175, aspartate 201, asparagine 203, aspartate 205, glutamate 212, aspartate 242, asparagine 244, aspartate 246, lysine 248, and glutamate 253. The residue at position 254 (threonine 254) is a Phosphothreonine. Phosphoserine occurs at positions 261 and 277. Ca(2+) is bound by residues aspartate 278, asparagine 280, aspartate 282, lysine 284, and glutamate 289. A Prevents secretion from ER motif is present at residues 312–315 (HDEF).

Belongs to the CREC family. As to quaternary structure, interacts with GGCX.

Its subcellular location is the endoplasmic reticulum membrane. It is found in the golgi apparatus. It localises to the secreted. The protein localises to the melanosome. The protein resides in the sarcoplasmic reticulum lumen. Involved in regulation of vitamin K-dependent carboxylation of multiple N-terminal glutamate residues. Seems to inhibit gamma-carboxylase GGCX. Binds 7 calcium ions with a low affinity. The sequence is that of Calumenin (CALU) from Bos taurus (Bovine).